A 425-amino-acid chain; its full sequence is CinA-like protein (425 aa).

The protein belongs to the CinA family.

This Trichodesmium erythraeum (strain IMS101) protein is CinA-like protein.